Reading from the N-terminus, the 379-residue chain is Gonadotropin-releasing hormone II receptor (379 aa).

Residues 1-40 are Extracellular-facing; sequence MSAGNGTPWGSAVGEEAWAGSGVAVEGSELPTFSTAAKVR. The chain crosses the membrane as a helical span at residues 41-60; that stretch reads VGVTIVLFVSSAGGNLAVLW. At 61–76 the chain is on the cytoplasmic side; it reads SVTRPQPSQLRPSPVR. The helical transmembrane segment at 77 to 96 threads the bilayer; the sequence is TLFAHLAAADLLVTFVVMPL. Over 97–114 the chain is Extracellular; the sequence is DATWNITVQWLAGDIACR. An N-linked (GlcNAc...) asparagine glycan is attached at N101. A disulfide bond links C113 and C188. A helical membrane pass occupies residues 115–136; that stretch reads TLMFLKLMAMYSAAFLPVVIGL. Topologically, residues 137–160 are cytoplasmic; that stretch reads DRQAAVLNPLGSRSGVRKLLGAAW. A helical transmembrane segment spans residues 161 to 178; the sequence is GLSFLLALPQLFLFHTVH. The Extracellular portion of the chain corresponds to 179–204; that stretch reads RAGPVPFTQCVTKGSFKARWQETTYN. Residues 205–224 form a helical membrane-spanning segment; it reads LFTFCCLFLLPLIAMAICYS. At 225 to 278 the chain is on the cytoplasmic side; it reads RIVLSVSSPQTRKGSHAPAGEFALRRSFDNRPRVCLRALRLALLILLTFILCWT. Residues 279–297 form a helical membrane-spanning segment; it reads PYYLLGLWYWFSPTMLTEV. Topologically, residues 298–303 are extracellular; sequence PPSLSH. The helical transmembrane segment at 304-323 threads the bilayer; sequence ILFLFGLLNAPLDPLLYGAF. Residues 324–379 are Cytoplasmic-facing; that stretch reads TFGCRRGHQELSIDSSKEGSGRMLQQEIHALRQQEVQKTVTSRSAGETKGISITSI.

The protein belongs to the G-protein coupled receptor 1 family. Phosphorylated on the C-terminal cytoplasmic tail.

Its subcellular location is the cell membrane. In terms of biological role, receptor for gonadotropin releasing hormone II (GnRH II). This receptor mediates its action by association with G proteins that activate a phosphatidylinositol-calcium second messenger system. This chain is Gonadotropin-releasing hormone II receptor (GNRHR2), found in Chlorocebus aethiops (Green monkey).